The sequence spans 159 residues: MNITIISVGKLKEKYLKHAIDEYSKRLSRYCKLNIVELQDEQTPDNASEKDELIIKDKEGNKILNSIKDNMYVITLDLKGKMISSEELSKFIDNCGVRGNSNLCFIIGGSLGLSEAVLKRSNYSLCFSKMTFPHQLFRVMLLEQIYRAFRISNGEPYHK.

S-adenosyl-L-methionine contacts are provided by residues L76, G108, and 127 to 132 (FSKMTF).

Belongs to the RNA methyltransferase RlmH family. As to quaternary structure, homodimer.

The protein resides in the cytoplasm. The enzyme catalyses pseudouridine(1915) in 23S rRNA + S-adenosyl-L-methionine = N(3)-methylpseudouridine(1915) in 23S rRNA + S-adenosyl-L-homocysteine + H(+). Functionally, specifically methylates the pseudouridine at position 1915 (m3Psi1915) in 23S rRNA. In Clostridium botulinum (strain Alaska E43 / Type E3), this protein is Ribosomal RNA large subunit methyltransferase H.